Consider the following 196-residue polypeptide: GTP cyclohydrolase-2 (196 aa).

49–53 (RVHSE) contributes to the GTP binding site. Zn(2+)-binding residues include cysteine 54, cysteine 65, and cysteine 67. GTP-binding positions include glutamine 70, 92 to 94 (EGR), and threonine 114. Aspartate 126 functions as the Proton acceptor in the catalytic mechanism. The active-site Nucleophile is arginine 128. The GTP site is built by threonine 149 and lysine 154.

It belongs to the GTP cyclohydrolase II family. As to quaternary structure, homodimer. It depends on Zn(2+) as a cofactor.

The catalysed reaction is GTP + 4 H2O = 2,5-diamino-6-hydroxy-4-(5-phosphoribosylamino)-pyrimidine + formate + 2 phosphate + 3 H(+). Its pathway is cofactor biosynthesis; riboflavin biosynthesis; 5-amino-6-(D-ribitylamino)uracil from GTP: step 1/4. Catalyzes the conversion of GTP to 2,5-diamino-6-ribosylamino-4(3H)-pyrimidinone 5'-phosphate (DARP), formate and pyrophosphate. The chain is GTP cyclohydrolase-2 from Escherichia coli O45:K1 (strain S88 / ExPEC).